We begin with the raw amino-acid sequence, 471 residues long: MSIQIFNTLTREKEPFKPLKDGEVKMYVCGPTVYNYIHIGNARPIIVFDTVRRYFTYRGYDVKFVSNFTDVDDKLIRAANELKLTVPEVADRFIGAYFDDVDQLNVAKASVNPRVTENMDEIIQLISTLIEKGYAYESAGDVYFRTKKFKDYGKLSGQELSELQHGARVEYNERKQDELDFTLWKAAKPDEIFWESPFGNGRPGWHIECSALAKKYLGDTIDIHAGGQDLVFPHHEDEIAQSEAATGKTFANYWMHNAFLNIDGEKMSKSLGNFITLHDVLKDNDPNVIRFFMLSVHYRKPITLNDAILEDAKNGLERLMIAYQNIDHRIQTDDGEYVEEAHEDEWLEQLTELKQAFEDDMDDDFNTANAITTFHELAKRANIYLAKETVSINVLREFLSMMRLFAEVLGLKLENTQTDSLDDSEVEALIEERLQARNERNFARADEIRDILKEKNIILEDTAQGTRFRRG.

A Zn(2+)-binding site is contributed by Cys-29. The short motif at Pro-31–Asn-41 is the 'HIGH' region element. Zn(2+) contacts are provided by Cys-209, His-234, and Glu-238. The short motif at Lys-266 to Ser-270 is the 'KMSKS' region element. Lys-269 is an ATP binding site.

The protein belongs to the class-I aminoacyl-tRNA synthetase family. Monomer. Zn(2+) serves as cofactor.

The protein localises to the cytoplasm. It carries out the reaction tRNA(Cys) + L-cysteine + ATP = L-cysteinyl-tRNA(Cys) + AMP + diphosphate. This Listeria welshimeri serovar 6b (strain ATCC 35897 / DSM 20650 / CCUG 15529 / CIP 8149 / NCTC 11857 / SLCC 5334 / V8) protein is Cysteine--tRNA ligase.